Reading from the N-terminus, the 347-residue chain is Quinolinate synthase (347 aa).

His47 and Ser68 together coordinate iminosuccinate. Cys113 is a [4Fe-4S] cluster binding site. Iminosuccinate contacts are provided by residues 139–141 (YAN) and Ser156. Residue Cys200 participates in [4Fe-4S] cluster binding. Iminosuccinate-binding positions include 226 to 228 (HPE) and Thr243. Cys297 contacts [4Fe-4S] cluster.

Belongs to the quinolinate synthase family. Type 1 subfamily. Requires [4Fe-4S] cluster as cofactor.

Its subcellular location is the cytoplasm. The enzyme catalyses iminosuccinate + dihydroxyacetone phosphate = quinolinate + phosphate + 2 H2O + H(+). It participates in cofactor biosynthesis; NAD(+) biosynthesis; quinolinate from iminoaspartate: step 1/1. Catalyzes the condensation of iminoaspartate with dihydroxyacetone phosphate to form quinolinate. In Shigella boydii serotype 4 (strain Sb227), this protein is Quinolinate synthase.